The sequence spans 330 residues: Ketol-acid reductoisomerase (NADP(+)) (330 aa).

The KARI N-terminal Rossmann domain occupies 1–182 (MAVVYYDQDA…GATRAGVIET (182 aa)). NADP(+) is bound by residues 25–28 (YGSQ), Arg-48, Ser-51, Ser-53, and 83–86 (DETQ). The active site involves His-108. Position 134 (Gly-134) interacts with NADP(+). Residues 183 to 328 (TFKEETETDL…DQLREMMSWL (146 aa)) form the KARI C-terminal knotted domain. Positions 191, 195, 227, and 231 each coordinate Mg(2+). Substrate is bound at residue Ser-252.

Belongs to the ketol-acid reductoisomerase family. Mg(2+) is required as a cofactor.

The enzyme catalyses (2R)-2,3-dihydroxy-3-methylbutanoate + NADP(+) = (2S)-2-acetolactate + NADPH + H(+). It carries out the reaction (2R,3R)-2,3-dihydroxy-3-methylpentanoate + NADP(+) = (S)-2-ethyl-2-hydroxy-3-oxobutanoate + NADPH + H(+). It participates in amino-acid biosynthesis; L-isoleucine biosynthesis; L-isoleucine from 2-oxobutanoate: step 2/4. Its pathway is amino-acid biosynthesis; L-valine biosynthesis; L-valine from pyruvate: step 2/4. Involved in the biosynthesis of branched-chain amino acids (BCAA). Catalyzes an alkyl-migration followed by a ketol-acid reduction of (S)-2-acetolactate (S2AL) to yield (R)-2,3-dihydroxy-isovalerate. In the isomerase reaction, S2AL is rearranged via a Mg-dependent methyl migration to produce 3-hydroxy-3-methyl-2-ketobutyrate (HMKB). In the reductase reaction, this 2-ketoacid undergoes a metal-dependent reduction by NADPH to yield (R)-2,3-dihydroxy-isovalerate. In Moorella thermoacetica (strain ATCC 39073 / JCM 9320), this protein is Ketol-acid reductoisomerase (NADP(+)).